Consider the following 273-residue polypeptide: Nickel permease LarQ (273 aa).

The next 5 helical transmembrane spans lie at 64-84 (LIQL…ILLW), 117-137 (MLFV…FFGL), 159-179 (LAGL…AIAI), 210-230 (LIGA…LELY), and 251-271 (HWRD…FIFW).

Belongs to the CbiQ family. As to quaternary structure, may form an energy-coupling factor (ECF) transporter complex composed of an ATP-binding protein (A component, LarO), a transmembrane protein (T component, LarQ) and a fused possible substrate-capture protein (S component, LarMN) of unknown stoichiometry.

Its subcellular location is the cell membrane. Functionally, probable transmembrane component of the energy-coupling factor (ECF) transporter complex LarMNQO involved in nickel import. The sequence is that of Nickel permease LarQ from Lactiplantibacillus plantarum (strain ATCC BAA-793 / NCIMB 8826 / WCFS1) (Lactobacillus plantarum).